The chain runs to 169 residues: Protein UL138 (169 aa).

Residues 8-28 traverse the membrane as a helical segment; that stretch reads VGLPIIGVMLVLIVAILCYLA. The interval 109-133 is disordered; the sequence is DRRAGSSSSSSVHVANQRNSVPPPD.

In terms of assembly, interacts with host TNFR1. Interacts with host MRP1. Interacts with host UAF1/WDR48. Interacts with host STING1.

Its subcellular location is the host Golgi apparatus membrane. Its function is as follows. Plays an important role in the establishment of latent viral infection. Modulates the expression of several host cell surface receptors such as TNFR1, CD36 or the MRP1 transporter during productive infection. For instance, associates with host MRP1 and induces its lysosomal degradation. Plays an inhibitory role in the host cGAS/STING/TBK1 pathway and upstream of IRF3 phosphorylation and NF-kappa-B leading to inhibition of interferon beta production during both lytic and latent infections. Also participates in the establishment of latency by sustaining an innate immune response through phosphorylation and activation of host STAT1. This Human cytomegalovirus (strain Merlin) (HHV-5) protein is Protein UL138 (UL138).